The following is a 185-amino-acid chain: Ribosome-recycling factor (185 aa).

It belongs to the RRF family.

It is found in the cytoplasm. In terms of biological role, responsible for the release of ribosomes from messenger RNA at the termination of protein biosynthesis. May increase the efficiency of translation by recycling ribosomes from one round of translation to another. In Pseudomonas fluorescens (strain Pf0-1), this protein is Ribosome-recycling factor.